Reading from the N-terminus, the 218-residue chain is Protein-methionine-sulfoxide reductase heme-binding subunit MsrQ (218 aa).

The next 5 helical transmembrane spans lie at 14 to 34 (LVHA…WQVW), 60 to 80 (LLLI…AVVI), 86 to 106 (LGLY…TLDL), 121 to 141 (PYIT…ITST), and 155 to 175 (LHML…WLVK).

This sequence belongs to the MsrQ family. In terms of assembly, heterodimer of a catalytic subunit (MsrP) and a heme-binding subunit (MsrQ). It depends on FMN as a cofactor. Requires heme b as cofactor.

Its subcellular location is the cell inner membrane. Part of the MsrPQ system that repairs oxidized periplasmic proteins containing methionine sulfoxide residues (Met-O), using respiratory chain electrons. Thus protects these proteins from oxidative-stress damage caused by reactive species of oxygen and chlorine generated by the host defense mechanisms. MsrPQ is essential for the maintenance of envelope integrity under bleach stress, rescuing a wide series of structurally unrelated periplasmic proteins from methionine oxidation. MsrQ provides electrons for reduction to the reductase catalytic subunit MsrP, using the quinone pool of the respiratory chain. The protein is Protein-methionine-sulfoxide reductase heme-binding subunit MsrQ of Xanthomonas axonopodis pv. citri (strain 306).